The primary structure comprises 359 residues: Peptide chain release factor 1 (359 aa).

Position 235 is an N5-methylglutamine (glutamine 235). The interval 287 to 312 (AQEASAMRSAQVGSGDRSERIRTYNF) is disordered.

It belongs to the prokaryotic/mitochondrial release factor family. Post-translationally, methylated by PrmC. Methylation increases the termination efficiency of RF1.

The protein localises to the cytoplasm. Functionally, peptide chain release factor 1 directs the termination of translation in response to the peptide chain termination codons UAG and UAA. In Chlamydia trachomatis serovar L2 (strain ATCC VR-902B / DSM 19102 / 434/Bu), this protein is Peptide chain release factor 1.